Here is a 424-residue protein sequence, read N- to C-terminus: Gamma-glutamyl phosphate reductase (424 aa).

A disordered region spans residues 1-27 (MSVEAQSRSGAVDTQEPADLREQVHSA).

This sequence belongs to the gamma-glutamyl phosphate reductase family.

The protein localises to the cytoplasm. It carries out the reaction L-glutamate 5-semialdehyde + phosphate + NADP(+) = L-glutamyl 5-phosphate + NADPH + H(+). Its pathway is amino-acid biosynthesis; L-proline biosynthesis; L-glutamate 5-semialdehyde from L-glutamate: step 2/2. Its function is as follows. Catalyzes the NADPH-dependent reduction of L-glutamate 5-phosphate into L-glutamate 5-semialdehyde and phosphate. The product spontaneously undergoes cyclization to form 1-pyrroline-5-carboxylate. This is Gamma-glutamyl phosphate reductase from Mycolicibacterium smegmatis (strain ATCC 700084 / mc(2)155) (Mycobacterium smegmatis).